The primary structure comprises 427 residues: Trigger factor (427 aa).

Positions 163 to 248 constitute a PPIase FKBP-type domain; the sequence is GDTVVIDFVG…IHEVKAKEVP (86 aa).

This sequence belongs to the FKBP-type PPIase family. Tig subfamily.

It localises to the cytoplasm. It catalyses the reaction [protein]-peptidylproline (omega=180) = [protein]-peptidylproline (omega=0). In terms of biological role, involved in protein export. Acts as a chaperone by maintaining the newly synthesized protein in an open conformation. Functions as a peptidyl-prolyl cis-trans isomerase. In Streptococcus pneumoniae (strain Hungary19A-6), this protein is Trigger factor.